The primary structure comprises 1070 residues: DNA-directed RNA polymerase subunit beta (1070 aa).

Belongs to the RNA polymerase beta chain family. As to quaternary structure, in plastids the minimal PEP RNA polymerase catalytic core is composed of four subunits: alpha, beta, beta', and beta''. When a (nuclear-encoded) sigma factor is associated with the core the holoenzyme is formed, which can initiate transcription.

It is found in the plastid. The enzyme catalyses RNA(n) + a ribonucleoside 5'-triphosphate = RNA(n+1) + diphosphate. In terms of biological role, DNA-dependent RNA polymerase catalyzes the transcription of DNA into RNA using the four ribonucleoside triphosphates as substrates. This is DNA-directed RNA polymerase subunit beta from Cuscuta exaltata (Tall dodder).